Consider the following 471-residue polypeptide: Glutamate--tRNA ligase (471 aa).

The 'HIGH' region signature appears at 9-19 (PSPTGYLHVGG). Zn(2+) contacts are provided by C98, C100, C125, and H127. The short motif at 237-241 (KLSKR) is the 'KMSKS' region element. ATP is bound at residue K240.

This sequence belongs to the class-I aminoacyl-tRNA synthetase family. Glutamate--tRNA ligase type 1 subfamily. In terms of assembly, monomer. Zn(2+) is required as a cofactor.

It localises to the cytoplasm. The enzyme catalyses tRNA(Glu) + L-glutamate + ATP = L-glutamyl-tRNA(Glu) + AMP + diphosphate. Its function is as follows. Catalyzes the attachment of glutamate to tRNA(Glu) in a two-step reaction: glutamate is first activated by ATP to form Glu-AMP and then transferred to the acceptor end of tRNA(Glu). This chain is Glutamate--tRNA ligase, found in Cronobacter sakazakii (strain ATCC BAA-894) (Enterobacter sakazakii).